A 726-amino-acid polypeptide reads, in one-letter code: WD repeat and coiled-coil-containing protein (726 aa).

WD repeat units follow at residues Gly-55–Asn-98 and Lys-154–Cys-194. The disordered stretch occupies residues Ser-503–Gly-571. The segment covering Gly-506–Asn-515 has biased composition (polar residues). Basic and acidic residues predominate over residues Phe-517–Asn-535. Positions Ser-550 to Pro-565 are enriched in polar residues. Positions Ser-581–Asn-609 form a coiled coil.

The sequence is that of WD repeat and coiled-coil-containing protein (wdcp) from Xenopus tropicalis (Western clawed frog).